Reading from the N-terminus, the 134-residue chain is Profilin-2 (134 aa).

An intrachain disulfide couples Cys-13 to Cys-118. An Involved in PIP2 interaction motif is present at residues 84–100; sequence AVIRGKKGSGGITIKKT. At Thr-114 the chain carries Phosphothreonine.

It belongs to the profilin family. Phosphorylated by MAP kinases.

The protein localises to the cytoplasm. It localises to the cytoskeleton. This chain is Profilin-2, found in Olea europaea (Common olive).